The following is an 84-amino-acid chain: MAKSNKRRPAPEKPVKARKCVFCAKKDQAIDYKDTALLRTYISERGKIRARRVTGNCVQHQRDIAIAVKNAREVALLPFTSSAR.

It belongs to the bacterial ribosomal protein bS18 family. Part of the 30S ribosomal subunit. Forms a tight heterodimer with protein bS6.

Its function is as follows. Binds as a heterodimer with protein bS6 to the central domain of the 16S rRNA, where it helps stabilize the platform of the 30S subunit. This is Small ribosomal subunit protein bS18A from Mycolicibacterium paratuberculosis (strain ATCC BAA-968 / K-10) (Mycobacterium paratuberculosis).